The primary structure comprises 291 residues: Nucleotide-binding protein Cthe_0113 (291 aa).

Residue 8–15 (GISGAGKS) coordinates ATP. 59-62 (DIRG) is a binding site for GTP.

This sequence belongs to the RapZ-like family.

Its function is as follows. Displays ATPase and GTPase activities. This is Nucleotide-binding protein Cthe_0113 from Acetivibrio thermocellus (strain ATCC 27405 / DSM 1237 / JCM 9322 / NBRC 103400 / NCIMB 10682 / NRRL B-4536 / VPI 7372) (Clostridium thermocellum).